A 547-amino-acid chain; its full sequence is Chaperonin GroEL (547 aa).

ATP is bound by residues 30-33 (TLGP), K51, 87-91 (DGTTT), G415, 479-481 (NAA), and D495.

It belongs to the chaperonin (HSP60) family. Forms a cylinder of 14 subunits composed of two heptameric rings stacked back-to-back. Interacts with the co-chaperonin GroES.

It is found in the cytoplasm. It catalyses the reaction ATP + H2O + a folded polypeptide = ADP + phosphate + an unfolded polypeptide.. Together with its co-chaperonin GroES, plays an essential role in assisting protein folding. The GroEL-GroES system forms a nano-cage that allows encapsulation of the non-native substrate proteins and provides a physical environment optimized to promote and accelerate protein folding. This Polynucleobacter necessarius subsp. necessarius (strain STIR1) protein is Chaperonin GroEL.